The primary structure comprises 406 residues: NAC transcription factor NAM-B1 (406 aa).

Positions 1 to 11 (MGSPDSSSGSA) are enriched in polar residues. Residues 1-40 (MGSPDSSSGSAQKPPRHQHQHQPPPPRRQGSAPELPPGFR) form a disordered region. Residues 35 to 204 (LPPGFRFHPT…DWVLCRIYKK (170 aa)) enclose the NAC domain. The DNA-binding element occupies 137–210 (VGVKKALVFY…IYKKTSKAAA (74 aa)).

It is found in the nucleus. Its function is as follows. Transcription factor of the NAC family associated with the grain protein content (GPC). Sequences of the 11 European varieties of H.vulgare tested belongs to the same haplotype while the sequence found in H.spontaneum, an ancestor of the cultivated H.vulgare which has a higher GPC, belongs to an other haplotype. The chain is NAC transcription factor NAM-B1 (NAM-B1) from Hordeum vulgare subsp. spontaneum (Wild barley).